Reading from the N-terminus, the 140-residue chain is MRHARGYRRLNRTHEHRKALWANMAGSLIEHEQIKTTLPKAKELRPIIEKMITLAKRGDLHARRQAASKLKEDQYVAKLFDVLGPRYKDRQGGYVRVLKAGFRYGDMAPMAIIEFVDRDRDAKGAADRARLAAEENAEEA.

The protein belongs to the bacterial ribosomal protein bL17 family. In terms of assembly, part of the 50S ribosomal subunit. Contacts protein L32.

The sequence is that of Large ribosomal subunit protein bL17 from Roseobacter denitrificans (strain ATCC 33942 / OCh 114) (Erythrobacter sp. (strain OCh 114)).